The chain runs to 615 residues: DNA mismatch repair protein MutL (615 aa).

Residues 370–397 are disordered; that stretch reads EPVAPRYTPAPASGSRPAAPWPNTQPGY. The span at 378–391 shows a compositional bias: low complexity; sequence PAPASGSRPAAPWP.

It belongs to the DNA mismatch repair MutL/HexB family.

Functionally, this protein is involved in the repair of mismatches in DNA. It is required for dam-dependent methyl-directed DNA mismatch repair. May act as a 'molecular matchmaker', a protein that promotes the formation of a stable complex between two or more DNA-binding proteins in an ATP-dependent manner without itself being part of a final effector complex. This Shigella dysenteriae serotype 1 (strain Sd197) protein is DNA mismatch repair protein MutL.